An 804-amino-acid chain; its full sequence is Probable exo-1,4-beta-xylosidase xlnD (804 aa).

Positions 1–17 (MAVAALALLALLPQALG) are cleaved as a signal peptide. N-linked (GlcNAc...) asparagine glycosylation is found at N20, N115, N139, N234, and N243. Residue D307 is part of the active site. 12 N-linked (GlcNAc...) asparagine glycosylation sites follow: N349, N382, N404, N433, N444, N485, N489, N621, N652, N666, N688, and N710.

It belongs to the glycosyl hydrolase 3 family.

The protein localises to the secreted. The catalysed reaction is Hydrolysis of (1-&gt;4)-beta-D-xylans, to remove successive D-xylose residues from the non-reducing termini.. Its pathway is glycan degradation; xylan degradation. Xylan 1,4-beta-xylosidase involved in the hydrolysis of xylan, a major structural heterogeneous polysaccharide found in plant biomass representing the second most abundant polysaccharide in the biosphere, after cellulose. This is Probable exo-1,4-beta-xylosidase xlnD (xlnD) from Aspergillus japonicus.